A 119-amino-acid polypeptide reads, in one-letter code: Beta-2-microglobulin (119 aa).

Positions 1–20 (MFRSVALAVLALLFLSGLEA) are cleaved as a signal peptide. In terms of domain architecture, Ig-like C1-type spans 25 to 114 (PKIQVYSRHP…VTLSGPRTVK (90 aa)). An intrachain disulfide couples Cys45 to Cys100.

The protein belongs to the beta-2-microglobulin family. In terms of assembly, heterodimer of an alpha chain and a beta chain. Beta-2-microglobulin is the beta-chain of major histocompatibility complex class I molecules.

Its subcellular location is the secreted. Its function is as follows. Component of the class I major histocompatibility complex (MHC). Involved in the presentation of peptide antigens to the immune system. The chain is Beta-2-microglobulin (B2M) from Chlorocebus aethiops (Green monkey).